The sequence spans 107 residues: Putative pterin-4-alpha-carbinolamine dehydratase (107 aa).

It belongs to the pterin-4-alpha-carbinolamine dehydratase family.

The catalysed reaction is (4aS,6R)-4a-hydroxy-L-erythro-5,6,7,8-tetrahydrobiopterin = (6R)-L-erythro-6,7-dihydrobiopterin + H2O. The polypeptide is Putative pterin-4-alpha-carbinolamine dehydratase (Rubrobacter xylanophilus (strain DSM 9941 / JCM 11954 / NBRC 16129 / PRD-1)).